We begin with the raw amino-acid sequence, 409 residues long: Peptidase T (409 aa).

Zn(2+) is bound at residue His-78. Asp-80 is an active-site residue. A Zn(2+)-binding site is contributed by Asp-139. The Proton acceptor role is filled by Glu-173. The Zn(2+) site is built by Glu-174, Asp-196, and His-378.

It belongs to the peptidase M20B family. It depends on Zn(2+) as a cofactor.

The protein localises to the cytoplasm. The enzyme catalyses Release of the N-terminal residue from a tripeptide.. In terms of biological role, cleaves the N-terminal amino acid of tripeptides. This is Peptidase T from Shewanella sediminis (strain HAW-EB3).